Here is a 777-residue protein sequence, read N- to C-terminus: Proton-coupled zinc antiporter SLC30A5 (777 aa).

Over 1–28 (MEEKYSSNVMSSGRLGPVDAPESRLTRY) the chain is Cytoplasmic. A helical transmembrane segment spans residues 29 to 49 (IVLLCFTKFLKALGIFESYDL). The Lumenal portion of the chain corresponds to 50–52 (LKV). The helical transmembrane segment at 53 to 73 (VHIVQFIFILKLGSTCFMVLF) threads the bilayer. Residues 74 to 94 (QKPFSSGKSITKRQWVSIVKH) lie on the Cytoplasmic side of the membrane. A helical transmembrane segment spans residues 95–115 (AFVSCIISLLWFFGLTLCGPL). Topologically, residues 116–117 (RT) are lumenal. Residues 118–138 (LLLFEHSDIVVISLLTVLFTG) form a helical membrane-spanning segment. The Cytoplasmic segment spans residues 139-148 (SGGGPSKTRG). A helical transmembrane segment spans residues 149–169 (AAFFIIAVICLLLFDNDDLMA). The Lumenal portion of the chain corresponds to 170–189 (KIAEHPEGHHDSALTHFLYR). Residues 190-210 (AFFLLGVADHKGGVLLLVLAL) traverse the membrane as a helical segment. At 211 to 234 (CFNVGFHTASRKLSLDIGGAKRLQ) the chain is on the cytoplasmic side. A helical transmembrane segment spans residues 235-255 (ALSHLVSVIILSPWVIILSAT). Residues 256-263 (TESKIESW) are Lumenal-facing. The helical transmembrane segment at 264-284 (SALIMPFMTVIFSVMIMDFYV) threads the bilayer. Over 285 to 299 (ESVCSVKMEPSKCAR) the chain is Cytoplasmic. Residues 300–320 (YGSFLIFASALLLGNFWTHPI) traverse the membrane as a helical segment. The Lumenal portion of the chain corresponds to 321 to 338 (TDQLRAMNKPAHQLHTEH). Residues 339–359 (VLSGGVVVSAIFFILSAQILA) form a helical membrane-spanning segment. Residues 360–414 (SSSRKGQRGTLVGYSPEGTPLYNFMGDALHNTSPSMPRFLKDSLKQILEEYDSRQ) lie on the Cytoplasmic side of the membrane. Residues 415-435 (IFYFLCLNLAFTFVEIFYGVW) traverse the membrane as a helical segment. Residues 436 to 444 (TNSLGLLSD) are Lumenal-facing. A helical transmembrane segment spans residues 445–465 (GFHMLFDCSALVMGLIAALMT). Residues histidine 447 and aspartate 451 each contribute to the Zn(2+) site. The Cytoplasmic segment spans residues 466–484 (RWKATRIFSYGYGRVEILS). Residues 485 to 505 (GFINGLFLVVIAFFVFIEAVA) form a helical membrane-spanning segment. Residues 506-516 (RIYDPPDINTD) are Lumenal-facing. Residues 517 to 537 (MLTPVSVGGLIVNLVGICAFS) form a helical membrane-spanning segment. The segment at 538-586 (HAHSHGAARGGCPSHDHGHSHHGHGHSHGHNHGHSHSDHGHNHGHTHNH) is his-rich loop; required for zinc transport. Residues 538 to 604 (HAHSHGAARG…VGMNANMRGV (67 aa)) lie on the Cytoplasmic side of the membrane. Residues 547 to 593 (GGCPSHDHGHSHHGHGHSHGHNHGHSHSDHGHNHGHTHNHGHSHGSA) are disordered. Composition is skewed to basic residues over residues 555–571 (GHSH…NHGH) and 579–589 (NHGHTHNHGHS). The helical transmembrane segment at 605-625 (FSHVLADTLGSVGVIVSTILI) threads the bilayer. Histidine 607 and aspartate 611 together coordinate Zn(2+). Topologically, residues 626–629 (RQFG) are lumenal. The helical transmembrane segment at 630 to 650 (WLIADPLCSLFIAVLIFGSVL) threads the bilayer. Topologically, residues 651-777 (PLLKDACQVI…KYYKDGTYIM (127 aa)) are cytoplasmic.

This sequence belongs to the cation diffusion facilitator (CDF) transporter (TC 2.A.4) family. SLC30A subfamily. Heterodimer with SLC30A6/ZNT6; form a functional zinc ion transmembrane transporter.

It localises to the golgi apparatus. Its subcellular location is the golgi stack membrane. The protein localises to the cytoplasmic vesicle. The protein resides in the COPII-coated vesicle membrane. It is found in the secretory vesicle membrane. It localises to the trans-Golgi network membrane. The catalysed reaction is Zn(2+)(in) + 2 H(+)(out) = Zn(2+)(out) + 2 H(+)(in). Functionally, together with SLC30A6 forms a functional proton-coupled zinc ion antiporter mediating zinc entry into the lumen of organelles along the secretory pathway. By contributing to zinc ion homeostasis within the early secretory pathway, regulates the activation and folding of enzymes like alkaline phosphatases and enzymes involved in phosphatidylinositol glycan anchor biosynthesis. This is Proton-coupled zinc antiporter SLC30A5 (slc30a5) from Xenopus tropicalis (Western clawed frog).